The chain runs to 265 residues: Bidirectional sugar transporter SWEET7b (265 aa).

At 1–9 the chain is on the extracellular side; sequence MVSPDLIRN. Residues 10 to 30 traverse the membrane as a helical segment; sequence MVGIVGNIISFGLFLSPVPTF. The region spanning 10-97 is the MtN3/slv 1 domain; that stretch reads MVGIVGNIIS…TIFFLFSDKK (88 aa). Over 31-45 the chain is Cytoplasmic; sequence YRIIKNKDVQDFKAD. The chain crosses the membrane as a helical span at residues 46-66; that stretch reads PYLATLLNCMLWVFYGLPIVH. At 67 to 69 the chain is on the extracellular side; the sequence is PNS. The helical transmembrane segment at 70–90 threads the bilayer; that stretch reads ILVVTINGIGLVIEAVYLTIF. Over 91-101 the chain is Cytoplasmic; that stretch reads FLFSDKKNKKK. Residues 102-122 traverse the membrane as a helical segment; the sequence is MGVVLATEALFMAAVVLGVLL. Over 123 to 131 the chain is Extracellular; it reads GAHTHQRRS. The helical transmembrane segment at 132 to 152 threads the bilayer; the sequence is LIVGILCVIFGTIMYSSPLTI. In terms of domain architecture, MtN3/slv 2 spans 133–215; the sequence is IVGILCVIFG…QLILYAIYYR (83 aa). Over 153-165 the chain is Cytoplasmic; that stretch reads MSQVVKTKSVEYM. A helical membrane pass occupies residues 166–186; the sequence is PLLLSVVSFLNGLCWTSYALI. At 187–189 the chain is on the extracellular side; it reads RLD. The chain crosses the membrane as a helical span at residues 190 to 210; the sequence is IFITIPNGLGVLFALMQLILY. Residues 211–265 lie on the Cytoplasmic side of the membrane; it reads AIYYRTIPKKQDKNLELPTVAPVAKDTSIVTPVSKDDDVDGGNASHVTINITIEL.

It belongs to the SWEET sugar transporter family. As to quaternary structure, forms homooligomers and/or heterooligomers.

The protein localises to the cell membrane. In terms of biological role, mediates both low-affinity uptake and efflux of sugar across the plasma membrane. The polypeptide is Bidirectional sugar transporter SWEET7b (SWEET7B) (Oryza sativa subsp. japonica (Rice)).